The sequence spans 107 residues: Large ribosomal subunit protein uL24 (107 aa).

Belongs to the universal ribosomal protein uL24 family. In terms of assembly, part of the 50S ribosomal subunit.

In terms of biological role, one of two assembly initiator proteins, it binds directly to the 5'-end of the 23S rRNA, where it nucleates assembly of the 50S subunit. Functionally, one of the proteins that surrounds the polypeptide exit tunnel on the outside of the subunit. In Fervidobacterium nodosum (strain ATCC 35602 / DSM 5306 / Rt17-B1), this protein is Large ribosomal subunit protein uL24.